The primary structure comprises 241 residues: MDGWSDLSSAPPQYREVAGIADWALLAQGLGWSINYLAMIYHSYKDRTYGMAILPLCCNFAWEFVYSVIYPSHNSAERAVLTTWMILNLFVMYTAIKFAPNEWQHAPLVRQCLPWIFPVAIAAFTAGHLALAATVGVSKAANWGAFLCFELLTSGAVCQLMSRGSSRGASYTIWLSRFLGSYIGGIFLHVRETHWPQEFGWISHPFVTWHGLMCFSLDIAYVTFLWRIRRQEHRSQRKKAL.

Helical transmembrane passes span 20-40 (IADWALLAQGLGWSINYLAMI), 49-69 (YGMAILPLCCNFAWEFVYSVI), 79-99 (AVLTTWMILNLFVMYTAIKFA), 113-133 (LPWIFPVAIAAFTAGHLALAA), 141-161 (ANWGAFLCFELLTSGAVCQLM), 168-188 (GASYTIWLSRFLGSYIGGIFL), and 206-226 (FVTWHGLMCFSLDIAYVTFLW).

This sequence belongs to the paxB family.

Its subcellular location is the membrane. The enzyme catalyses 2-oxo-3-[(8S)-epoxy-(2E,6E)-farnesyl]-6-(pyridin-3-yl)-2H-pyran-4-olate + H(+) = deacetylpyripyropene E. Its pathway is secondary metabolite biosynthesis; terpenoid biosynthesis. Functionally, terpene cyclase; part of the gene cluster that mediates the biosynthesis of pyripyropene A, a specific human acyl-coenzyme A:cholesterol acyltransferase 2 inhibitor. The first step of the pathway is the synthesis of nicotinyl-CoA from nicotinic acid by the nicotinic acid-CoA ligase pyr1. Nicotinyl-CoA is then a substrate of polyketide synthase pyr2 to produce 4-hydroxy-6-(3-pyridinyl)-2H-pyran-2-one (HPPO) which is further prenylated by the polyprenyl transferase pyr6 to yield farnesyl-HPPO. The next steps consist of an epoxidation of farnesyl-HPPO to epoxyfarnesyl-HPPO by FAD-dependent monooxygenase pyr5 and a cyclization of the terpenoid portion by the terpene cyclase pyr4 to yield deacetyl-pyripyropene E. The 2 cytochrome P450 monooxygenases pyr3 and pyr9, and the 2 acetyltransferases pyr7 and pyr8 are involved in the conversion of deacetyl-pyripyropene E into pyripyropene A through several cycles of oxidation and acetylation steps. Pyr7 acetylates deacetyl-pyripyropene E to pyripyropene E which is oxidized to 11-deacetyl-pyripyropene O by pyr3, which is in turn acetylated into pyripyropene O by pyr8. Pyripyropene O is then oxidized to deacetyl-pyripyropene A by pyr9. Deacetyl-pyripyropene A is finally acetylated to pyripyropene A by pyr8. The polypeptide is Terpene cyclase pyr4 (Aspergillus fumigatus (strain ATCC MYA-4609 / CBS 101355 / FGSC A1100 / Af293) (Neosartorya fumigata)).